The sequence spans 129 residues: uncharacterized protein (129 aa).

The tract at residues S34–V57 is disordered.

This is an uncharacterized protein from Homo sapiens (Human).